The following is a 229-amino-acid chain: MDFLRDVLQEYGVRFEESQIEKTFRYLNELLNSPHNLTALRSLDSAVHKNVAEILIPLKHENLRGSLLDVGSGNGVPGLILAIFFPELKVTLLDSKEKAVQFLEHVVRKLNLENAAVVKERAENFSREHREEYDYATARAVARLNTLVEICAPAVRIGGKLLFYKGPSFEEELKEARKALDELKVELEEVRRYTLKTGEQRCLLVLRKTDRSPEKYPRRVGIPFKRPLL.

Residues G71, 122-123 (AE), and R139 contribute to the S-adenosyl-L-methionine site.

The protein belongs to the methyltransferase superfamily. RNA methyltransferase RsmG family.

The protein resides in the cytoplasm. Specifically methylates the N7 position of a guanine in 16S rRNA. This Thermotoga neapolitana (strain ATCC 49049 / DSM 4359 / NBRC 107923 / NS-E) protein is Ribosomal RNA small subunit methyltransferase G.